The sequence spans 551 residues: Cation/acetate symporter ActP (551 aa).

13 helical membrane passes run 34-54 (IEAIVMFVLFVGATLYITYWA), 77-97 (GLAIAGDFMSAASFLGISALV), 104-124 (GLIYSIGFLIGWPIILFLIAE), 150-170 (LSACGSLVVVALYLIAQMVGA), 184-204 (VAVVLVGILMVMYVLFGGMLA), 207-227 (WVQIIKAVLLLAGASFMALMV), 263-283 (ISALSLGLALMFGTAGLPHIL), 304-324 (GFIGYFYILTFIIGFGAILLV), 356-376 (FFLGFISAVAFATILAVVAGL), 406-426 (VSKITVVVLGFVAIGLGILFE), 430-450 (IAFMVGLAFSIAASCNFPIIF), 469-489 (LGLLTAVILMILGPTIWVTIL), and 498-518 (YEYPALFSMIVAFVGIWFFSI).

Belongs to the sodium:solute symporter (SSF) (TC 2.A.21) family.

The protein localises to the cell inner membrane. In terms of biological role, transports acetate. In Yersinia enterocolitica serotype O:8 / biotype 1B (strain NCTC 13174 / 8081), this protein is Cation/acetate symporter ActP.